The primary structure comprises 355 residues: Erythronate-4-phosphate dehydrogenase (355 aa).

Substrate contacts are provided by Ser-45 and Thr-66. NAD(+) is bound at residue Asp-146. The active site involves Arg-206. Asp-229 is an NAD(+) binding site. Glu-234 is an active-site residue. His-251 acts as the Proton donor in catalysis. Gly-254 is a binding site for NAD(+). A substrate-binding site is contributed by Tyr-255.

It belongs to the D-isomer specific 2-hydroxyacid dehydrogenase family. PdxB subfamily. As to quaternary structure, homodimer.

Its subcellular location is the cytoplasm. The catalysed reaction is 4-phospho-D-erythronate + NAD(+) = (R)-3-hydroxy-2-oxo-4-phosphooxybutanoate + NADH + H(+). The protein operates within cofactor biosynthesis; pyridoxine 5'-phosphate biosynthesis; pyridoxine 5'-phosphate from D-erythrose 4-phosphate: step 2/5. Catalyzes the oxidation of erythronate-4-phosphate to 3-hydroxy-2-oxo-4-phosphonooxybutanoate. This chain is Erythronate-4-phosphate dehydrogenase, found in Acinetobacter baumannii (strain AB307-0294).